Consider the following 553-residue polypeptide: Hydroxylamine reductase (553 aa).

Residues Cys-3, Cys-6, Cys-18, and Cys-25 each coordinate [2Fe-2S] cluster. Residues His-252, Glu-276, Cys-320, Cys-408, Cys-436, Cys-461, Glu-495, and Lys-497 each coordinate hybrid [4Fe-2O-2S] cluster. At Cys-408 the chain carries Cysteine persulfide.

Belongs to the HCP family. The cofactor is [2Fe-2S] cluster. Hybrid [4Fe-2O-2S] cluster serves as cofactor.

The protein localises to the cytoplasm. It carries out the reaction A + NH4(+) + H2O = hydroxylamine + AH2 + H(+). Its function is as follows. Catalyzes the reduction of hydroxylamine to form NH(3) and H(2)O. This Vibrio parahaemolyticus serotype O3:K6 (strain RIMD 2210633) protein is Hydroxylamine reductase.